Consider the following 230-residue polypeptide: Cytochrome c oxidase subunit 2 (230 aa).

Topologically, residues 1-14 (MAHPSQLGFQDAAS) are mitochondrial intermembrane. A helical transmembrane segment spans residues 15–45 (PVMEELIHFHDHTLMIVFLISTLVLYIITAM). Residues 46–59 (VSTKLTNKYILDSQ) are Mitochondrial matrix-facing. A helical membrane pass occupies residues 60–87 (EIEIVWTILPAIILIMIALPSLRILYLM). The Mitochondrial intermembrane segment spans residues 88 to 230 (DEINDPHLTI…TWSSLMLEEA (143 aa)). Residues His-161, Cys-196, Glu-198, Cys-200, His-204, and Met-207 each coordinate Cu cation. Glu-198 lines the Mg(2+) pocket.

The protein belongs to the cytochrome c oxidase subunit 2 family. In terms of assembly, component of the cytochrome c oxidase (complex IV, CIV), a multisubunit enzyme composed of 14 subunits. The complex is composed of a catalytic core of 3 subunits MT-CO1, MT-CO2 and MT-CO3, encoded in the mitochondrial DNA, and 11 supernumerary subunits COX4I, COX5A, COX5B, COX6A, COX6B, COX6C, COX7A, COX7B, COX7C, COX8 and NDUFA4, which are encoded in the nuclear genome. The complex exists as a monomer or a dimer and forms supercomplexes (SCs) in the inner mitochondrial membrane with NADH-ubiquinone oxidoreductase (complex I, CI) and ubiquinol-cytochrome c oxidoreductase (cytochrome b-c1 complex, complex III, CIII), resulting in different assemblies (supercomplex SCI(1)III(2)IV(1) and megacomplex MCI(2)III(2)IV(2)). Found in a complex with TMEM177, COA6, COX18, COX20, SCO1 and SCO2. Interacts with TMEM177 in a COX20-dependent manner. Interacts with COX20. Interacts with COX16. Requires Cu cation as cofactor.

The protein resides in the mitochondrion inner membrane. The enzyme catalyses 4 Fe(II)-[cytochrome c] + O2 + 8 H(+)(in) = 4 Fe(III)-[cytochrome c] + 2 H2O + 4 H(+)(out). Functionally, component of the cytochrome c oxidase, the last enzyme in the mitochondrial electron transport chain which drives oxidative phosphorylation. The respiratory chain contains 3 multisubunit complexes succinate dehydrogenase (complex II, CII), ubiquinol-cytochrome c oxidoreductase (cytochrome b-c1 complex, complex III, CIII) and cytochrome c oxidase (complex IV, CIV), that cooperate to transfer electrons derived from NADH and succinate to molecular oxygen, creating an electrochemical gradient over the inner membrane that drives transmembrane transport and the ATP synthase. Cytochrome c oxidase is the component of the respiratory chain that catalyzes the reduction of oxygen to water. Electrons originating from reduced cytochrome c in the intermembrane space (IMS) are transferred via the dinuclear copper A center (CU(A)) of subunit 2 and heme A of subunit 1 to the active site in subunit 1, a binuclear center (BNC) formed by heme A3 and copper B (CU(B)). The BNC reduces molecular oxygen to 2 water molecules using 4 electrons from cytochrome c in the IMS and 4 protons from the mitochondrial matrix. This is Cytochrome c oxidase subunit 2 (MT-CO2) from Scyliorhinus canicula (Small-spotted catshark).